The chain runs to 124 residues: MAKLTKESFIQSLKEMNIKEVMELVNAMKEEFGIDPSAVVVAGGAAGGAEVAEKTEVTITLKNAGGNKVPVIKKVREISPELSLMDAKKLVDSAPAKLKDNVKPEEAEEIKAAFAALGAEISID.

The protein belongs to the bacterial ribosomal protein bL12 family. As to quaternary structure, homodimer. Part of the ribosomal stalk of the 50S ribosomal subunit. Forms a multimeric L10(L12)X complex, where L10 forms an elongated spine to which 2 to 4 L12 dimers bind in a sequential fashion. Binds GTP-bound translation factors.

In terms of biological role, forms part of the ribosomal stalk which helps the ribosome interact with GTP-bound translation factors. Is thus essential for accurate translation. The polypeptide is Large ribosomal subunit protein bL12 (Mycoplasma mobile (strain ATCC 43663 / 163K / NCTC 11711) (Mesomycoplasma mobile)).